Reading from the N-terminus, the 43-residue chain is DeltaKappa-actitoxin-Avd4b (43 aa).

Cystine bridges form between Cys4–Cys39, Cys6–Cys32, and Cys22–Cys40.

It belongs to the sea anemone type 3 (BDS) potassium channel toxin family.

It localises to the secreted. It is found in the nematocyst. Functionally, acts as a gating modifier on both Kv and Nav ion channels. Voltage-dependently inhibits voltage-gated potassium channels Kv3 (Kv3.1/KCNC1, Kv3.2/KCNC2 and Kv3.4/KCNC4). Slows inactivation of the voltage-gated sodium channel Nav1.7/SCN9A. Inhibits all Kv3.1, Kv3.2 and Kv3.4 by about 50% when tested at a voltage of +40 mV. May act by binding residues in voltage-sensing domains S3b and S4 of Kv3. Tests have been done on human Nav1.7/SCN9A and rat SCG neurons that mostly carry Nav1.7 channels (EC(50)=300 nM). This toxin also reduces blood pressure. The chain is DeltaKappa-actitoxin-Avd4b from Anemonia sulcata (Mediterranean snakelocks sea anemone).